The sequence spans 161 residues: Putative pre-16S rRNA nuclease (161 aa).

Belongs to the YqgF nuclease family.

It localises to the cytoplasm. Functionally, could be a nuclease involved in processing of the 5'-end of pre-16S rRNA. This Rhodospirillum rubrum (strain ATCC 11170 / ATH 1.1.1 / DSM 467 / LMG 4362 / NCIMB 8255 / S1) protein is Putative pre-16S rRNA nuclease.